A 350-amino-acid chain; its full sequence is Probable transposase-like protein At4g04430 (350 aa).

Disordered regions lie at residues 1-57 and 307-328; these read MPSD…PSVN and QIGQ…QVAN. Low complexity predominate over residues 30–43; that stretch reads SGVQGSGSRSGSTV.

It belongs to the transposase 24 family.

The chain is Probable transposase-like protein At4g04430 from Arabidopsis thaliana (Mouse-ear cress).